The following is a 308-amino-acid chain: Olfactory receptor 2T6 (308 aa).

The Extracellular segment spans residues 1–28 (MNENNETLTRGFTLMGLFTHNKCSGFFF). N-linked (GlcNAc...) asparagine glycosylation is present at N5. Residues 29–49 (GVICAVFFMAMIANGVMIFLI) traverse the membrane as a helical segment. Residues 50–57 (NIDPHLHT) lie on the Cytoplasmic side of the membrane. A helical transmembrane segment spans residues 58–78 (PMYFLLSHLSVIDTLYISTIV). At 79–98 (PKMLVDYLMGEGTISFIACT) the chain is on the extracellular side. Residues C97 and C179 are joined by a disulfide bond. A helical transmembrane segment spans residues 99 to 119 (AQCFLYMGFMGAEFFLLGLMA). Over 120–145 (YDRYVAICNPLRYPVLISWRVCWMIL) the chain is Cytoplasmic. The chain crosses the membrane as a helical span at residues 146 to 166 (ASSWFGGALDSFLLTPITMSL). Residues 167 to 203 (PFCASHQINHFFCEAPTMLRLACGDKTTYETVMYVCC) are Extracellular-facing. The chain crosses the membrane as a helical span at residues 204–224 (VAMLLIPFSVVTASYTRILIT). The Cytoplasmic portion of the chain corresponds to 225–236 (VHQMTSAEGRKK). Residues 237-257 (AFATCSSHMMVVTLFYGAALY) form a helical membrane-spanning segment. At 258–271 (TYTLPQSYHTPIKD) the chain is on the extracellular side. A helical transmembrane segment spans residues 272 to 292 (KVFSAFYTILTPLLNPLIYSL). At 293–308 (RNRDVMGALKRVVARC) the chain is on the cytoplasmic side.

This sequence belongs to the G-protein coupled receptor 1 family.

The protein localises to the cell membrane. Functionally, odorant receptor. This chain is Olfactory receptor 2T6 (OR2T6), found in Homo sapiens (Human).